The chain runs to 213 residues: NADH-quinone oxidoreductase subunit B (213 aa).

Positions 38, 39, 104, and 133 each coordinate [4Fe-4S] cluster. The disordered stretch occupies residues 172–213 (IMPENTNRFPGQLEKPKTSTLTLEAPDADDAEEASTPEPVAA). Residues 197 to 206 (PDADDAEEAS) show a composition bias toward acidic residues.

Belongs to the complex I 20 kDa subunit family. In terms of assembly, NDH-1 is composed of 14 different subunits. Subunits NuoB, C, D, E, F, and G constitute the peripheral sector of the complex. [4Fe-4S] cluster serves as cofactor.

The protein localises to the cell inner membrane. The catalysed reaction is a quinone + NADH + 5 H(+)(in) = a quinol + NAD(+) + 4 H(+)(out). NDH-1 shuttles electrons from NADH, via FMN and iron-sulfur (Fe-S) centers, to quinones in the respiratory chain. The immediate electron acceptor for the enzyme in this species is believed to be a menaquinone. Couples the redox reaction to proton translocation (for every two electrons transferred, four hydrogen ions are translocated across the cytoplasmic membrane), and thus conserves the redox energy in a proton gradient. This chain is NADH-quinone oxidoreductase subunit B (nuoB), found in Salinibacter ruber (strain DSM 13855 / M31).